Reading from the N-terminus, the 392-residue chain is 1-deoxy-D-xylulose 5-phosphate reductoisomerase (392 aa).

The NADPH site is built by Thr10, Gly11, Ser12, Ile13, Asn38, and Asn124. Lys125 is a 1-deoxy-D-xylulose 5-phosphate binding site. NADPH is bound at residue Glu126. Residue Asp150 coordinates Mn(2+). 1-deoxy-D-xylulose 5-phosphate is bound by residues Ser151, Glu152, Ser176, and His199. Position 152 (Glu152) interacts with Mn(2+). Gly205 is an NADPH binding site. 1-deoxy-D-xylulose 5-phosphate contacts are provided by Ser212, Asn217, Lys218, and Glu221. Glu221 is a Mn(2+) binding site.

The protein belongs to the DXR family. It depends on Mg(2+) as a cofactor. Requires Mn(2+) as cofactor.

The enzyme catalyses 2-C-methyl-D-erythritol 4-phosphate + NADP(+) = 1-deoxy-D-xylulose 5-phosphate + NADPH + H(+). It functions in the pathway isoprenoid biosynthesis; isopentenyl diphosphate biosynthesis via DXP pathway; isopentenyl diphosphate from 1-deoxy-D-xylulose 5-phosphate: step 1/6. Functionally, catalyzes the NADPH-dependent rearrangement and reduction of 1-deoxy-D-xylulose-5-phosphate (DXP) to 2-C-methyl-D-erythritol 4-phosphate (MEP). This chain is 1-deoxy-D-xylulose 5-phosphate reductoisomerase, found in Synechococcus sp. (strain JA-2-3B'a(2-13)) (Cyanobacteria bacterium Yellowstone B-Prime).